Reading from the N-terminus, the 465-residue chain is Zinc finger CCCH domain-containing protein 58 (465 aa).

The disordered stretch occupies residues Met1–Glu26. C3H1-type zinc fingers lie at residues Arg51 to Asn79, Arg97 to Gln125, and Arg145 to Pro173. 2 disordered regions span residues Pro173 to Gln200 and Leu274 to Glu302. The span at Gln177 to Pro191 shows a compositional bias: low complexity. The segment covering Ser283 to Pro298 has biased composition (polar residues). 2 C3H1-type zinc fingers span residues Arg300–Glu328 and Arg345–Gly373. Residues Ser397 to Thr431 show a composition bias toward low complexity. A disordered region spans residues Ser397 to Ser465. The segment covering Ser444–Lys453 has biased composition (basic and acidic residues). Residues Gly454–Ser465 are compositionally biased toward polar residues.

Its subcellular location is the nucleus. This chain is Zinc finger CCCH domain-containing protein 58, found in Arabidopsis thaliana (Mouse-ear cress).